A 233-amino-acid chain; its full sequence is DNA repair protein RecO (233 aa).

The protein belongs to the RecO family.

In terms of biological role, involved in DNA repair and RecF pathway recombination. This is DNA repair protein RecO from Francisella philomiragia subsp. philomiragia (strain ATCC 25017 / CCUG 19701 / FSC 153 / O#319-036).